The primary structure comprises 205 residues: Ferritin heavy chain (205 aa).

Positions 1-19 (MVKLIASLLLLAVVAQAYG) are cleaved as a signal peptide. A Ferritin-like diiron domain is found at 35-190 (VDMKDACIKG…GKLTTLKKMM (156 aa)). Cys41 and Cys150 are joined by a disulfide. Residues Glu52, Glu87, His90, Glu136, and Gln172 each contribute to the Fe cation site.

It belongs to the ferritin family. As to quaternary structure, oligomer of 12 light (L) chains and 12 heavy (H) chains; L and H chains are disulfide-linked. The functional molecule forms a roughly spherical shell with a diameter of 12 nm and contains a central cavity into which the insoluble ferric iron core is deposited. Expressed in hemolymph and gut (at protein level). Expressed in the head (at protein level). Expressed in thorax and abdomen.

The protein localises to the golgi apparatus. Its subcellular location is the secreted. It catalyses the reaction 4 Fe(2+) + O2 + 4 H(+) = 4 Fe(3+) + 2 H2O. Its function is as follows. Stores iron in a soluble, non-toxic, readily available form. Important for iron homeostasis. Iron is taken up in the ferrous form and deposited as ferric hydroxides after oxidation. Ferritin is composed of a heavy (H) chain which is responsible for the oxidation and uptake of ferrous iron, and a light (L) chain which facilitates the nucleation of the ferrihydrite iron core. Required for dietary iron absorption in the midgut. Involved in tissue iron detoxification by exporting excess iron. Functions as an antioxidant and protects the developing organs from cell-mediated ferroptosis. Required for embryo and larval development. Plays a role in blood cell (haemocyte) differentiation in the lymph gland at the larval stage. May also store Zn(2+) and Mn(2+) and thus may play a role in zinc and manganese homeostasis. The polypeptide is Ferritin heavy chain (Drosophila melanogaster (Fruit fly)).